A 128-amino-acid chain; its full sequence is Ig kappa chain V-V region T1 (128 aa).

The N-terminal stretch at Met1–Cys20 is a signal peptide. The interval Asp21–Cys43 is framework-1. A disulfide bridge connects residues Cys43 and Cys108. Positions Lys44–Thr54 are complementarity-determining-1. The segment at Trp55–Tyr69 is framework-2. Residues Arg70–Asp76 form a complementarity-determining-2 region. Residues Gly77–Cys108 form a framework-3 region. Residues Leu109–Thr117 are complementarity-determining-3. Residues Phe118–Lys127 are framework-4.

In Mus musculus (Mouse), this protein is Ig kappa chain V-V region T1.